The following is a 144-amino-acid chain: Large ribosomal subunit protein uL11 (144 aa).

This sequence belongs to the universal ribosomal protein uL11 family. Part of the ribosomal stalk of the 50S ribosomal subunit. Interacts with L10 and the large rRNA to form the base of the stalk. L10 forms an elongated spine to which L12 dimers bind in a sequential fashion forming a multimeric L10(L12)X complex. Post-translationally, one or more lysine residues are methylated.

In terms of biological role, forms part of the ribosomal stalk which helps the ribosome interact with GTP-bound translation factors. This Polaromonas naphthalenivorans (strain CJ2) protein is Large ribosomal subunit protein uL11.